The sequence spans 103 residues: Large ribosomal subunit protein bL21 (103 aa).

It belongs to the bacterial ribosomal protein bL21 family. Part of the 50S ribosomal subunit. Contacts protein L20.

This protein binds to 23S rRNA in the presence of protein L20. The sequence is that of Large ribosomal subunit protein bL21 from Ralstonia nicotianae (strain ATCC BAA-1114 / GMI1000) (Ralstonia solanacearum).